Here is a 554-residue protein sequence, read N- to C-terminus: Muellerian-inhibiting factor (554 aa).

An N-terminal signal peptide occupies residues 1-24 (MQGPHLSPLVLLLATMGAVLQPEA). Residues 25–446 (VENLATNTRG…GREGRGRTGR (422 aa)) constitute a propeptide that is removed on maturation. Residues N62, N326, and N410 are each glycosylated (N-linked (GlcNAc...) asparagine). Cystine bridges form between C456–C520, C482–C551, and C486–C553.

Belongs to the TGF-beta family. Homodimer; disulfide-linked. Preproprotein is proteolytically processed to generate N- and C-terminal cleavage products that homodimerize and associate to form a biologically active non-covalent complex. Binding of the non-covalent complex to AMHRII induces dissociation of the pro-region from the mature C-terminal dimer. The N-terminal portion of the protein, despite having no intrinsic activity, has the role of amplifying the activity of the C-terminus. In terms of tissue distribution, expressed in Sertoli cells of fetal testes, and in testes just after birth, but absent in adult testes. In female, AMH is expressed after birth in the granulosa cells of the follicle.

The protein localises to the secreted. In terms of biological role, plays an important role in several reproductive functions, including Muellerian duct regression during male fetal sexua,l differentiation and in the adult plays a role in Leydig cell differentiation and function. In female acts as a negative regulator of the primordial to primary follicle transition and decreases FSH sensitivity of growing follicles. Binds to its sole type II receptor, AMHR2 that recruits type I receptors ACVR1 and BMPR1A which subsequently activates the Smad pathway. This is Muellerian-inhibiting factor (Amh) from Mus musculus (Mouse).